Reading from the N-terminus, the 559-residue chain is MANAPVLLLKEGTQRSSGRDALKNNILAAVTLAEMLKSSLGPRGLDKMLIDSFGDVTITNDGATIVKEMEIQHPAAKLLVEAAKAQDAEVGDGTTSAVVLAGLLLDKADDLLDQNIHPTIIIEGYKKALNKSLEIIDQLATKIDVSNLNSLATRDQLKKIVYTTMSSKFIAGGEEMDKIMNMVIDAVSIVAEPLPEGGYNVPLDLIKIDKKKGGSIEDSMLVHGLVLDKEVVHPGMPRRVEKAKIAVLDAALEVEKPEISAKISITSPEQIKAFLDEEAKYLKDMVDKLASIGANVVICQKGIDDVAQHFLAKKGILAVRRVKRSDIEKLEKALGARIISSIKDATPEDLGYAELVEERRVGNDKMVFIEGAKNPKAVNILLRGSNDMALDEAERSINDALHSLRNVLMKPMIVAGGGAVETELALRLREYARSVGGKEQLAIEKFAEALEEIPMILAETAGMEPIQTLMDLRAKHAKGLINAGVDVMNGKIADDMLALNVLEPVRVKAQVLKSAVEAATAILKIDDLIAAAPLKSGEKKGEKKEGGEEEKSSTPSSLE.

Positions 536 to 552 are enriched in basic and acidic residues; that stretch reads SGEKKGEKKEGGEEEKS. Residues 536–559 are disordered; that stretch reads SGEKKGEKKEGGEEEKSSTPSSLE.

It belongs to the TCP-1 chaperonin family. Forms a Heterooligomeric complex of two stacked nine-membered rings; one of alpha and the other of beta subunits.

Functionally, molecular chaperone; binds unfolded polypeptides in vitro, and has a weak ATPase activity. The protein is Thermosome subunit alpha (thsA) of Sulfurisphaera tokodaii (strain DSM 16993 / JCM 10545 / NBRC 100140 / 7) (Sulfolobus tokodaii).